A 257-amino-acid chain; its full sequence is UPF0246 protein Shewmr4_2963 (257 aa).

Belongs to the UPF0246 family.

The polypeptide is UPF0246 protein Shewmr4_2963 (Shewanella sp. (strain MR-4)).